The following is an 88-amino-acid chain: Probable small nuclear ribonucleoprotein F (88 aa).

Residues Asn-7–Asp-79 form the Sm domain.

The protein belongs to the snRNP Sm proteins family. SmF/LSm6 subfamily.

The protein resides in the nucleus. In terms of biological role, probable common Sm protein, is found in U1 and U2 snRNPs and may be part of the spliceosome. In Arabidopsis thaliana (Mouse-ear cress), this protein is Probable small nuclear ribonucleoprotein F.